The following is an 838-amino-acid chain: Pentatricopeptide repeat-containing protein At4g19440, chloroplastic (838 aa).

A chloroplast-targeting transit peptide spans 1 to 32; it reads MAALLYFPKISSQMTSSHFISFSPMDLRRLSR. PPR repeat units lie at residues 238–268, 272–306, 307–341, 342–376, 377–411, 412–446, 447–481, 482–516, 517–551, 552–586, 587–621, 622–656, 657–691, 692–726, 727–761, and 762–796; these read SKTTCNILLTSLVRANEFQKCCEAFDVVCKG, DVYLFTTAINAFCKGGKVEEAVKLFSKMEEAGVAP, NVVTFNTVIDGLGMCGRYDEAFMFKEKMVERGMEP, TLITYSILVKGLTRAKRIGDAYFVLKEMTKKGFPP, NVIVYNNLIDSFIEAGSLNKAIEIKDLMVSKGLSL, TSSTYNTLIKGYCKNGQADNAERLLKEMLSIGFNV, NQGSFTSVICLLCSHLMFDSALRFVGEMLLRNMSP, GGGLLTTLISGLCKHGKHSKALELWFQFLNKGFVV, DTRTSNALLHGLCEAGKLDEAFRIQKEILGRGCVM, DRVSYNTLISGCCGKKKLDEAFMFLDEMVKRGLKP, DNYTYSILICGLFNMNKVEEAIQFWDDCKRNGMLP, DVYTYSVMIDGCCKAERTEEGQEFFDEMMSKNVQP, NTVVYNHLIRAYCRSGRLSMALELREDMKHKGISP, NSATYTSLIKGMSIISRVEEAKLLFEEMRMEGLEP, NVFHYTALIDGYGKLGQMVKVECLLREMHSKNVHP, and NKITYTVMIGGYARDGNVTEASRLLNEMREKGIVP.

This sequence belongs to the PPR family. P subfamily.

It localises to the plastid. It is found in the chloroplast. In Arabidopsis thaliana (Mouse-ear cress), this protein is Pentatricopeptide repeat-containing protein At4g19440, chloroplastic.